The following is a 182-amino-acid chain: UPF0149 protein CGSHiGG_07585 (182 aa).

Belongs to the UPF0149 family.

In Haemophilus influenzae (strain PittGG), this protein is UPF0149 protein CGSHiGG_07585.